A 146-amino-acid chain; its full sequence is Prepilin peptidase-dependent protein D (146 aa).

Positions Met1 to Gly6 are cleaved as a propeptide — leader sequence. Phe7 carries the post-translational modification N-methylphenylalanine. The helical transmembrane segment at Phe7–Ile27 threads the bilayer.

Belongs to the N-Me-Phe pilin family.

It localises to the fimbrium. The protein localises to the membrane. Functionally, major component of the type IV pilus (T4P) that plays a role in cell adhesion and motility. Not produced when grown under standard laboratory conditions. In Escherichia coli (strain K12), this protein is Prepilin peptidase-dependent protein D (ppdD).